Here is a 336-residue protein sequence, read N- to C-terminus: 3-isopropylmalate dehydrogenase (336 aa).

The substrate site is built by R87, R97, R121, and D211. The Mg(2+) site is built by D211, D235, and D239. Residue G271–D283 coordinates NAD(+).

Belongs to the isocitrate and isopropylmalate dehydrogenases family. LeuB type 2 subfamily. As to quaternary structure, homodimer. Mg(2+) serves as cofactor. The cofactor is Mn(2+).

Its subcellular location is the cytoplasm. The catalysed reaction is (2R,3S)-3-isopropylmalate + NAD(+) = 4-methyl-2-oxopentanoate + CO2 + NADH. It participates in amino-acid biosynthesis; L-leucine biosynthesis; L-leucine from 3-methyl-2-oxobutanoate: step 3/4. In terms of biological role, catalyzes the oxidation of 3-carboxy-2-hydroxy-4-methylpentanoate (3-isopropylmalate) to 3-carboxy-4-methyl-2-oxopentanoate. The product decarboxylates to 4-methyl-2 oxopentanoate. This is 3-isopropylmalate dehydrogenase from Mycobacterium sp. (strain JLS).